The primary structure comprises 347 residues: Photosystem II protein D1 (347 aa).

Helical transmembrane passes span 31–48 (YIGW…LAII), 120–135 (HFIG…EWEF), and 144–158 (WIYL…AATA). Histidine 120 serves as a coordination point for chlorophyll a. Position 128 (tryptophan 128) interacts with pheophytin a. [CaMn4O5] cluster is bound by residues aspartate 172 and glutamate 191. A helical membrane pass occupies residues 199–220 (FHILGVAGVFGGSLFSAMHGSL). Histidine 200 contributes to the chlorophyll a binding site. A quinone contacts are provided by residues histidine 217 and 266–267 (SF). Histidine 217 is a Fe cation binding site. Histidine 274 contributes to the Fe cation binding site. The chain crosses the membrane as a helical span at residues 276 to 290 (FLAAWPVIGIWFTAL). Residues histidine 334, glutamate 335, and aspartate 344 each contribute to the [CaMn4O5] cluster site.

The protein belongs to the reaction center PufL/M/PsbA/D family. As to quaternary structure, PSII is composed of 1 copy each of membrane proteins PsbA, PsbB, PsbC, PsbD, PsbE, PsbF, PsbH, PsbI, PsbJ, PsbK, PsbL, PsbM, PsbT, PsbX, PsbY, PsbZ, Psb30/Ycf12, at least 3 peripheral proteins of the oxygen-evolving complex and a large number of cofactors. It forms dimeric complexes. The D1/D2 heterodimer binds P680, chlorophylls that are the primary electron donor of PSII, and subsequent electron acceptors. It shares a non-heme iron and each subunit binds pheophytin, quinone, additional chlorophylls, carotenoids and lipids. D1 provides most of the ligands for the Mn4-Ca-O5 cluster of the oxygen-evolving complex (OEC). There is also a Cl(-1) ion associated with D1 and D2, which is required for oxygen evolution. The PSII complex binds additional chlorophylls, carotenoids and specific lipids. serves as cofactor. Tyr-163 forms a radical intermediate that is referred to as redox-active TyrZ, YZ or Y-Z.

The protein resides in the plastid. The protein localises to the chloroplast thylakoid membrane. The catalysed reaction is 2 a plastoquinone + 4 hnu + 2 H2O = 2 a plastoquinol + O2. Photosystem II (PSII) is a light-driven water:plastoquinone oxidoreductase that uses light energy to abstract electrons from H(2)O, generating O(2) and a proton gradient subsequently used for ATP formation. It consists of a core antenna complex that captures photons, and an electron transfer chain that converts photonic excitation into a charge separation. The D1/D2 (PsbA/PsbD) reaction center heterodimer binds P680, the primary electron donor of PSII as well as several subsequent electron acceptors. In Alexandrium tamarense (Red tide dinoflagellate), this protein is Photosystem II protein D1.